The sequence spans 178 residues: Large ribosomal subunit protein uL6 (178 aa).

This sequence belongs to the universal ribosomal protein uL6 family. Part of the 50S ribosomal subunit.

Functionally, this protein binds to the 23S rRNA, and is important in its secondary structure. It is located near the subunit interface in the base of the L7/L12 stalk, and near the tRNA binding site of the peptidyltransferase center. In Nitrosococcus oceani (strain ATCC 19707 / BCRC 17464 / JCM 30415 / NCIMB 11848 / C-107), this protein is Large ribosomal subunit protein uL6.